We begin with the raw amino-acid sequence, 890 residues long: Translation initiation factor IF-2 (890 aa).

The tract at residues 45-304 (LIDHLNQKNS…LQQGFQKPAQ (260 aa)) is disordered. Over residues 67–81 (STLNIPGTGGKSKSV) the composition is skewed to polar residues. Residues 92–217 (VKRDPQEAER…RMAEENKWTD (126 aa)) are compositionally biased toward basic and acidic residues. Over residues 252–266 (GRGRNAKAARPKKGN) the composition is skewed to basic residues. Over residues 267–280 (KHAESKADREEARA) the composition is skewed to basic and acidic residues. A tr-type G domain is found at 389-558 (PRAPVVTIMG…LLQAEVLELK (170 aa)). Residues 398 to 405 (GHVDHGKT) are G1. Residue 398 to 405 (GHVDHGKT) coordinates GTP. Positions 423–427 (GITQH) are G2. The segment at 444-447 (DTPG) is G3. GTP is bound by residues 444–448 (DTPGH) and 498–501 (NKID). The interval 498 to 501 (NKID) is G4. Residues 534-536 (SAK) form a G5 region. Lys808 carries the post-translational modification N6-acetyllysine.

The protein belongs to the TRAFAC class translation factor GTPase superfamily. Classic translation factor GTPase family. IF-2 subfamily.

The protein resides in the cytoplasm. Functionally, one of the essential components for the initiation of protein synthesis. Protects formylmethionyl-tRNA from spontaneous hydrolysis and promotes its binding to the 30S ribosomal subunits. Also involved in the hydrolysis of GTP during the formation of the 70S ribosomal complex. In Shigella sonnei (strain Ss046), this protein is Translation initiation factor IF-2.